The following is a 559-amino-acid chain: Formate--tetrahydrofolate ligase (559 aa).

Position 68-75 (68-75) interacts with ATP; sequence TPAGEGKT.

It belongs to the formate--tetrahydrofolate ligase family.

The enzyme catalyses (6S)-5,6,7,8-tetrahydrofolate + formate + ATP = (6R)-10-formyltetrahydrofolate + ADP + phosphate. The protein operates within one-carbon metabolism; tetrahydrofolate interconversion. The protein is Formate--tetrahydrofolate ligase of Rhizobium johnstonii (strain DSM 114642 / LMG 32736 / 3841) (Rhizobium leguminosarum bv. viciae).